The sequence spans 613 residues: Dihydroxy-acid dehydratase 3 (613 aa).

Asp81 is a Mg(2+) binding site. Cys122 contributes to the [2Fe-2S] cluster binding site. The Mg(2+) site is built by Asp123 and Lys124. At Lys124 the chain carries N6-carboxylysine. A [2Fe-2S] cluster-binding site is contributed by Cys197. Residue Glu493 participates in Mg(2+) binding. The active-site Proton acceptor is Ser519.

The protein belongs to the IlvD/Edd family. Homodimer. [2Fe-2S] cluster is required as a cofactor. It depends on Mg(2+) as a cofactor.

It catalyses the reaction (2R)-2,3-dihydroxy-3-methylbutanoate = 3-methyl-2-oxobutanoate + H2O. The enzyme catalyses (2R,3R)-2,3-dihydroxy-3-methylpentanoate = (S)-3-methyl-2-oxopentanoate + H2O. The protein operates within amino-acid biosynthesis; L-isoleucine biosynthesis; L-isoleucine from 2-oxobutanoate: step 3/4. It participates in amino-acid biosynthesis; L-valine biosynthesis; L-valine from pyruvate: step 3/4. In terms of biological role, functions in the biosynthesis of branched-chain amino acids. Catalyzes the dehydration of (2R,3R)-2,3-dihydroxy-3-methylpentanoate (2,3-dihydroxy-3-methylvalerate) into 2-oxo-3-methylpentanoate (2-oxo-3-methylvalerate) and of (2R)-2,3-dihydroxy-3-methylbutanoate (2,3-dihydroxyisovalerate) into 2-oxo-3-methylbutanoate (2-oxoisovalerate), the penultimate precursor to L-isoleucine and L-valine, respectively. The protein is Dihydroxy-acid dehydratase 3 of Nocardia farcinica (strain IFM 10152).